Reading from the N-terminus, the 355-residue chain is GPN-loop GTPase 1 (355 aa).

Residues 1–30 (MAEKAENLPSSSAEASEEPSPQTGPNVNQK) are disordered. Residues 9 to 21 (PSSSAEASEEPSP) show a composition bias toward low complexity. 40-45 (GSGKTT) lines the GTP pocket. A Gly-Pro-Asn (GPN)-loop; involved in dimer interface motif is present at residues 97 to 99 (GPN). Position 200–203 (200–203 (NKAD)) interacts with GTP. Residues 286–311 (EKVLAEKKLLDEEERKKRDEETLKGK) adopt a coiled-coil conformation.

The protein belongs to the GPN-loop GTPase family. As to quaternary structure, heterodimer with GPN3. Binds to RNA polymerase II (RNAPII).

It localises to the cytoplasm. The protein localises to the nucleus. Its function is as follows. Small GTPase required for proper nuclear import of RNA polymerase II (RNAPII). May act at an RNAP assembly step prior to nuclear import. This chain is GPN-loop GTPase 1, found in Caenorhabditis elegans.